Consider the following 541-residue polypeptide: Glucose-6-phosphate isomerase (541 aa).

The active-site Proton donor is the E346. Catalysis depends on residues H377 and K506.

The protein belongs to the GPI family.

The protein localises to the cytoplasm. The enzyme catalyses alpha-D-glucose 6-phosphate = beta-D-fructose 6-phosphate. Its pathway is carbohydrate biosynthesis; gluconeogenesis. It participates in carbohydrate degradation; glycolysis; D-glyceraldehyde 3-phosphate and glycerone phosphate from D-glucose: step 2/4. In terms of biological role, catalyzes the reversible isomerization of glucose-6-phosphate to fructose-6-phosphate. The chain is Glucose-6-phosphate isomerase from Rhizobium leguminosarum bv. trifolii (strain WSM2304).